Consider the following 316-residue polypeptide: tRNA dimethylallyltransferase (316 aa).

17 to 24 provides a ligand contact to ATP; the sequence is GPTASGKT. Residue 19-24 coordinates substrate; sequence TASGKT. Interaction with substrate tRNA stretches follow at residues 42–45, 166–170, 247–252, and 280–287; these read DSAL, QRLSR, RCVGYR, and KRQITWLR.

This sequence belongs to the IPP transferase family. In terms of assembly, monomer. Requires Mg(2+) as cofactor.

The catalysed reaction is adenosine(37) in tRNA + dimethylallyl diphosphate = N(6)-dimethylallyladenosine(37) in tRNA + diphosphate. Its function is as follows. Catalyzes the transfer of a dimethylallyl group onto the adenine at position 37 in tRNAs that read codons beginning with uridine, leading to the formation of N6-(dimethylallyl)adenosine (i(6)A). The protein is tRNA dimethylallyltransferase of Enterobacter sp. (strain 638).